We begin with the raw amino-acid sequence, 199 residues long: Holliday junction branch migration complex subunit RuvA (199 aa).

The interval 1–64 is domain I; it reads MIALLTGKLA…EDAINLYGFR (64 aa). A domain II region spans residues 65 to 143; it reads TQQEKELFQL…KLGLAQPQAG (79 aa). The flexible linker stretch occupies residues 144-148; sequence GATAP. The domain III stretch occupies residues 149–199; that stretch reads AKQEIRDDVLSALINLGYKEAVVQKALAELKVTEDATVELVLKQALKILMK.

It belongs to the RuvA family. In terms of assembly, homotetramer. Forms an RuvA(8)-RuvB(12)-Holliday junction (HJ) complex. HJ DNA is sandwiched between 2 RuvA tetramers; dsDNA enters through RuvA and exits via RuvB. An RuvB hexamer assembles on each DNA strand where it exits the tetramer. Each RuvB hexamer is contacted by two RuvA subunits (via domain III) on 2 adjacent RuvB subunits; this complex drives branch migration. In the full resolvosome a probable DNA-RuvA(4)-RuvB(12)-RuvC(2) complex forms which resolves the HJ.

The protein resides in the cytoplasm. In terms of biological role, the RuvA-RuvB-RuvC complex processes Holliday junction (HJ) DNA during genetic recombination and DNA repair, while the RuvA-RuvB complex plays an important role in the rescue of blocked DNA replication forks via replication fork reversal (RFR). RuvA specifically binds to HJ cruciform DNA, conferring on it an open structure. The RuvB hexamer acts as an ATP-dependent pump, pulling dsDNA into and through the RuvAB complex. HJ branch migration allows RuvC to scan DNA until it finds its consensus sequence, where it cleaves and resolves the cruciform DNA. In Geobacter sp. (strain M21), this protein is Holliday junction branch migration complex subunit RuvA.